Here is a 284-residue protein sequence, read N- to C-terminus: Bifunctional protein FolD (284 aa).

NADP(+)-binding positions include 165–167 (GRG), T192, and V233.

It belongs to the tetrahydrofolate dehydrogenase/cyclohydrolase family. Homodimer.

The catalysed reaction is (6R)-5,10-methylene-5,6,7,8-tetrahydrofolate + NADP(+) = (6R)-5,10-methenyltetrahydrofolate + NADPH. The enzyme catalyses (6R)-5,10-methenyltetrahydrofolate + H2O = (6R)-10-formyltetrahydrofolate + H(+). It participates in one-carbon metabolism; tetrahydrofolate interconversion. Its function is as follows. Catalyzes the oxidation of 5,10-methylenetetrahydrofolate to 5,10-methenyltetrahydrofolate and then the hydrolysis of 5,10-methenyltetrahydrofolate to 10-formyltetrahydrofolate. The polypeptide is Bifunctional protein FolD (Corynebacterium glutamicum (strain R)).